Here is a 308-residue protein sequence, read N- to C-terminus: D-alanine--D-alanine ligase (308 aa).

The region spanning 102–302 (KKVAAAAGIP…FGDLVSWMVE (201 aa)) is the ATP-grasp domain. 128-183 (PLQPPYVVKPVREGSSFGVVIVKEDQSHPPQILTSSEWPFGNQVMVERYIHGRELT) contributes to the ATP binding site. Positions 252, 269, and 271 each coordinate Mg(2+).

The protein belongs to the D-alanine--D-alanine ligase family. Mg(2+) is required as a cofactor. Requires Mn(2+) as cofactor.

The protein resides in the cytoplasm. The catalysed reaction is 2 D-alanine + ATP = D-alanyl-D-alanine + ADP + phosphate + H(+). It participates in cell wall biogenesis; peptidoglycan biosynthesis. In terms of biological role, cell wall formation. In Agrobacterium fabrum (strain C58 / ATCC 33970) (Agrobacterium tumefaciens (strain C58)), this protein is D-alanine--D-alanine ligase.